The chain runs to 165 residues: Ribosome maturation factor RimM (165 aa).

The region spanning 94–163 is the PRC barrel domain; it reads EDEFYIADLN…KDYVTLNYQR (70 aa).

It belongs to the RimM family. Binds ribosomal protein uS19.

The protein resides in the cytoplasm. Its function is as follows. An accessory protein needed during the final step in the assembly of 30S ribosomal subunit, possibly for assembly of the head region. Essential for efficient processing of 16S rRNA. May be needed both before and after RbfA during the maturation of 16S rRNA. It has affinity for free ribosomal 30S subunits but not for 70S ribosomes. The chain is Ribosome maturation factor RimM from Rickettsia akari (strain Hartford).